The primary structure comprises 284 residues: Bifunctional protein FolD (284 aa).

NADP(+) is bound by residues 166–168 and Ile232; that span reads GAS.

It belongs to the tetrahydrofolate dehydrogenase/cyclohydrolase family. As to quaternary structure, homodimer.

It carries out the reaction (6R)-5,10-methylene-5,6,7,8-tetrahydrofolate + NADP(+) = (6R)-5,10-methenyltetrahydrofolate + NADPH. The catalysed reaction is (6R)-5,10-methenyltetrahydrofolate + H2O = (6R)-10-formyltetrahydrofolate + H(+). It functions in the pathway one-carbon metabolism; tetrahydrofolate interconversion. In terms of biological role, catalyzes the oxidation of 5,10-methylenetetrahydrofolate to 5,10-methenyltetrahydrofolate and then the hydrolysis of 5,10-methenyltetrahydrofolate to 10-formyltetrahydrofolate. The polypeptide is Bifunctional protein FolD (Shewanella sediminis (strain HAW-EB3)).